The sequence spans 320 residues: Ribosomal RNA small subunit methyltransferase H (320 aa).

Residues 42–44 (GGH), D62, F86, D108, and Q115 each bind S-adenosyl-L-methionine.

It belongs to the methyltransferase superfamily. RsmH family.

The protein localises to the cytoplasm. The enzyme catalyses cytidine(1402) in 16S rRNA + S-adenosyl-L-methionine = N(4)-methylcytidine(1402) in 16S rRNA + S-adenosyl-L-homocysteine + H(+). In terms of biological role, specifically methylates the N4 position of cytidine in position 1402 (C1402) of 16S rRNA. This Yersinia enterocolitica serotype O:8 / biotype 1B (strain NCTC 13174 / 8081) protein is Ribosomal RNA small subunit methyltransferase H.